The sequence spans 790 residues: Protein SEY1 (790 aa).

At 1–692 (MELSEGELSH…KRSIVQHITQ (692 aa)) the chain is on the cytoplasmic side. One can recognise a GB1/RHD3-type G domain in the interval 55-284 (GNNYHIISVF…VSNELFKPEY (230 aa)). Position 65 to 72 (65 to 72 (GSQSTGKS)) interacts with GTP. Residues 693-713 (IPYYIYLIILVLGWNEFMAII) form a helical membrane-spanning segment. The Lumenal segment spans residues 714 to 716 (RNP). Residues 717-737 (LFFSLSIVLGATVYVLYYLGL) form a helical membrane-spanning segment. The Cytoplasmic segment spans residues 738 to 790 (LRPALVVAQRTMDEVIVMAKTKLREVLIDDHEVTGRQLNKMAGSKENIELDDM).

This sequence belongs to the TRAFAC class dynamin-like GTPase superfamily. GB1/RHD3 GTPase family. RHD3 subfamily.

The protein resides in the endoplasmic reticulum membrane. Functionally, cooperates with the reticulon proteins and tubule-shaping DP1 family proteins to generate and maintain the structure of the tubular endoplasmic reticulum network. Has GTPase activity, which is required for its function in ER organization. This is Protein SEY1 from Candida albicans (strain WO-1) (Yeast).